The following is a 24-amino-acid chain: DYE-linked aldehyde dehydrogenase, alpha chain (24 aa).

In terms of assembly, heterotetramer composed of an alpha, a beta and two gamma chains. Mo-molybdopterin cytosine dinucleotide is required as a cofactor.

Active with aldehydes and formate esters as substrates. The sequence is that of DYE-linked aldehyde dehydrogenase, alpha chain from Amycolatopsis methanolica.